We begin with the raw amino-acid sequence, 130 residues long: MCLSYNRRNQRKKVVLMTIKKFSLLAIASLSLLSLAACDMDDKDDHMDNQPKTSQTSKKVKLSEDKAKSIALKDASVTEADAQMLSVTQDNEDGKAVYEIEFQNKDQEYSYTIDANSGDIVEKSSEPIND.

Residues 41-64 (DDKDDHMDNQPKTSQTSKKVKLSE) are disordered.

This is an uncharacterized protein from Streptococcus pyogenes serotype M6 (strain ATCC BAA-946 / MGAS10394).